We begin with the raw amino-acid sequence, 390 residues long: Putative glutamate--cysteine ligase 2 (390 aa).

This sequence belongs to the glutamate--cysteine ligase type 2 family. YbdK subfamily.

It catalyses the reaction L-cysteine + L-glutamate + ATP = gamma-L-glutamyl-L-cysteine + ADP + phosphate + H(+). ATP-dependent carboxylate-amine ligase which exhibits weak glutamate--cysteine ligase activity. The polypeptide is Putative glutamate--cysteine ligase 2 (Chloroflexus aggregans (strain MD-66 / DSM 9485)).